The following is a 60-amino-acid chain: Cytotoxin 8 (60 aa).

Intrachain disulfides connect Cys-3/Cys-21, Cys-14/Cys-38, Cys-42/Cys-53, and Cys-54/Cys-59.

It belongs to the three-finger toxin family. Short-chain subfamily. Type IA cytotoxin sub-subfamily. Monomer in solution; Homodimer and oligomer in the presence of negatively charged lipids forming a pore with a size ranging between 20 and 30 Angstroms. As to expression, expressed by the venom gland.

Its subcellular location is the secreted. It is found in the target cell membrane. Its function is as follows. Shows cytolytic activity on many different cells by forming pore in lipid membranes. In vivo, increases heart rate or kills the animal by cardiac arrest. In addition, it binds to heparin with high affinity, interacts with Kv channel-interacting protein 1 (KCNIP1) in a calcium-independent manner, and binds to integrin alpha-V/beta-3 (ITGAV/ITGB3) with moderate affinity. This Naja annulifera (Banded Egyptian cobra) protein is Cytotoxin 8.